A 293-amino-acid chain; its full sequence is Coatomer subunit epsilon-2 (293 aa).

Belongs to the COPE family. In terms of assembly, oligomeric complex that consists of at least the alpha, beta, beta', gamma, delta, epsilon and zeta subunits.

It is found in the cytoplasm. The protein resides in the golgi apparatus membrane. The protein localises to the cytoplasmic vesicle. Its subcellular location is the COPI-coated vesicle membrane. In terms of biological role, the coatomer is a cytosolic protein complex that binds to dilysine motifs and reversibly associates with Golgi non-clathrin-coated vesicles, which further mediate biosynthetic protein transport from the ER, via the Golgi up to the trans Golgi network. The coatomer complex is required for budding from Golgi membranes, and is essential for the retrograde Golgi-to-ER transport of dilysine-tagged proteins. The sequence is that of Coatomer subunit epsilon-2 from Arabidopsis thaliana (Mouse-ear cress).